A 355-amino-acid polypeptide reads, in one-letter code: tRNA N6-adenosine threonylcarbamoyltransferase (355 aa).

2 residues coordinate Fe cation: H113 and H117. Residues 135–139 (LASGG), D168, G181, and N279 each bind substrate. Fe cation is bound at residue D307.

The protein belongs to the KAE1 / TsaD family. It depends on Fe(2+) as a cofactor.

It localises to the cytoplasm. It carries out the reaction L-threonylcarbamoyladenylate + adenosine(37) in tRNA = N(6)-L-threonylcarbamoyladenosine(37) in tRNA + AMP + H(+). Its function is as follows. Required for the formation of a threonylcarbamoyl group on adenosine at position 37 (t(6)A37) in tRNAs that read codons beginning with adenine. Is involved in the transfer of the threonylcarbamoyl moiety of threonylcarbamoyl-AMP (TC-AMP) to the N6 group of A37, together with TsaE and TsaB. TsaD likely plays a direct catalytic role in this reaction. The protein is tRNA N6-adenosine threonylcarbamoyltransferase of Bradyrhizobium sp. (strain BTAi1 / ATCC BAA-1182).